Reading from the N-terminus, the 471-residue chain is Probable anion transporter 5, chloroplastic (471 aa).

The transit peptide at 1-59 directs the protein to the chloroplast; the sequence is MAASASASALQAERCLLVGVGAGPRRHRLPLRMPPPLHAPPALLLLPHRRRRRWPPAVR. The segment at 56-76 is disordered; the sequence is PAVRASPGEGGGGGGGGGGGG. 4 helical membrane-spanning segments follow: residues 62–82, 103–123, 162–182, and 185–205; these read PGEG…AGAL, IGVV…GFMP, VVFG…PPII, and LGWE…CLGF. A compositionally biased stretch (gly residues) spans 63–76; it reads GEGGGGGGGGGGGG. The tract at residues 226–247 is disordered; the sequence is GQSPSGSSDLISSSVSPKSSES. Residues 228–247 are compositionally biased toward low complexity; the sequence is SPSGSSDLISSSVSPKSSES. Helical transmembrane passes span 270–290, 307–327, 348–368, 371–391, 403–423, and 435–455; these read VWAM…CLSW, AWVS…AAPF, IAFL…GVPP, IVAF…GLYC, ILLG…VALT, and ISLF…WLAF.

Belongs to the major facilitator superfamily. Sodium/anion cotransporter (TC 2.A.1.14) family.

The protein resides in the plastid. The protein localises to the chloroplast membrane. In terms of biological role, probable anion transporter. In Oryza sativa subsp. japonica (Rice), this protein is Probable anion transporter 5, chloroplastic (PHT4;5).